The chain runs to 483 residues: Protein nucleotidyltransferase YdiU (483 aa).

Residues G87, G89, R90, K110, D122, G123, R173, and R180 each coordinate ATP. D249 serves as the catalytic Proton acceptor. Positions 250 and 259 each coordinate Mg(2+). D259 provides a ligand contact to ATP.

It belongs to the SELO family. Requires Mg(2+) as cofactor. It depends on Mn(2+) as a cofactor.

It carries out the reaction L-seryl-[protein] + ATP = 3-O-(5'-adenylyl)-L-seryl-[protein] + diphosphate. It catalyses the reaction L-threonyl-[protein] + ATP = 3-O-(5'-adenylyl)-L-threonyl-[protein] + diphosphate. The enzyme catalyses L-tyrosyl-[protein] + ATP = O-(5'-adenylyl)-L-tyrosyl-[protein] + diphosphate. The catalysed reaction is L-histidyl-[protein] + UTP = N(tele)-(5'-uridylyl)-L-histidyl-[protein] + diphosphate. It carries out the reaction L-seryl-[protein] + UTP = O-(5'-uridylyl)-L-seryl-[protein] + diphosphate. It catalyses the reaction L-tyrosyl-[protein] + UTP = O-(5'-uridylyl)-L-tyrosyl-[protein] + diphosphate. In terms of biological role, nucleotidyltransferase involved in the post-translational modification of proteins. It can catalyze the addition of adenosine monophosphate (AMP) or uridine monophosphate (UMP) to a protein, resulting in modifications known as AMPylation and UMPylation. This is Protein nucleotidyltransferase YdiU from Pelagibacter ubique (strain HTCC1062).